Consider the following 106-residue polypeptide: NADH dehydrogenase [ubiquinone] 1 alpha subcomplex subunit 8-B (106 aa).

An N-acetylserine modification is found at serine 2. 2 consecutive CHCH domains span residues 26-67 (GMRC…LKDL) and 68-106 (HQKCQKEMDDYVGCMYYYTNEFDLCRKEQEAFEKVCPLK). 3 consecutive short sequence motifs (cx9C motif) follow at residues 29–39 (CMPENVAFLKC), 49–59 (CLDKGRDVTRC), and 71–81 (CQKEMDDYVGC). Intrachain disulfides connect cysteine 29–cysteine 59, cysteine 39–cysteine 49, cysteine 71–cysteine 103, and cysteine 81–cysteine 92. Positions 92–103 (CRKEQEAFEKVC) match the Cx10C motif motif.

This sequence belongs to the complex I NDUFA8 subunit family. As to quaternary structure, complex I is composed of at least 49 different subunits.

Its subcellular location is the mitochondrion. It is found in the mitochondrion intermembrane space. Accessory subunit of the mitochondrial membrane respiratory chain NADH dehydrogenase (Complex I), that is believed not to be involved in catalysis. Complex I functions in the transfer of electrons from NADH to the respiratory chain. The immediate electron acceptor for the enzyme is believed to be ubiquinone. This Arabidopsis thaliana (Mouse-ear cress) protein is NADH dehydrogenase [ubiquinone] 1 alpha subcomplex subunit 8-B.